Reading from the N-terminus, the 227-residue chain is Cytochrome c oxidase subunit 2 (227 aa).

Over M1–S14 the chain is Mitochondrial intermembrane. The helical transmembrane segment at P15–M45 threads the bilayer. Topologically, residues L46–Q59 are mitochondrial matrix. A helical membrane pass occupies residues E60–M87. The Mitochondrial intermembrane portion of the chain corresponds to D88–I227. The Cu cation site is built by H161, C196, E198, C200, H204, and M207. E198 is a Mg(2+) binding site.

It belongs to the cytochrome c oxidase subunit 2 family. In terms of assembly, component of the cytochrome c oxidase (complex IV, CIV), a multisubunit enzyme composed of 14 subunits. The complex is composed of a catalytic core of 3 subunits MT-CO1, MT-CO2 and MT-CO3, encoded in the mitochondrial DNA, and 11 supernumerary subunits COX4I, COX5A, COX5B, COX6A, COX6B, COX6C, COX7A, COX7B, COX7C, COX8 and NDUFA4, which are encoded in the nuclear genome. The complex exists as a monomer or a dimer and forms supercomplexes (SCs) in the inner mitochondrial membrane with NADH-ubiquinone oxidoreductase (complex I, CI) and ubiquinol-cytochrome c oxidoreductase (cytochrome b-c1 complex, complex III, CIII), resulting in different assemblies (supercomplex SCI(1)III(2)IV(1) and megacomplex MCI(2)III(2)IV(2)). Found in a complex with TMEM177, COA6, COX18, COX20, SCO1 and SCO2. Interacts with TMEM177 in a COX20-dependent manner. Interacts with COX20. Interacts with COX16. Cu cation is required as a cofactor.

It localises to the mitochondrion inner membrane. It carries out the reaction 4 Fe(II)-[cytochrome c] + O2 + 8 H(+)(in) = 4 Fe(III)-[cytochrome c] + 2 H2O + 4 H(+)(out). In terms of biological role, component of the cytochrome c oxidase, the last enzyme in the mitochondrial electron transport chain which drives oxidative phosphorylation. The respiratory chain contains 3 multisubunit complexes succinate dehydrogenase (complex II, CII), ubiquinol-cytochrome c oxidoreductase (cytochrome b-c1 complex, complex III, CIII) and cytochrome c oxidase (complex IV, CIV), that cooperate to transfer electrons derived from NADH and succinate to molecular oxygen, creating an electrochemical gradient over the inner membrane that drives transmembrane transport and the ATP synthase. Cytochrome c oxidase is the component of the respiratory chain that catalyzes the reduction of oxygen to water. Electrons originating from reduced cytochrome c in the intermembrane space (IMS) are transferred via the dinuclear copper A center (CU(A)) of subunit 2 and heme A of subunit 1 to the active site in subunit 1, a binuclear center (BNC) formed by heme A3 and copper B (CU(B)). The BNC reduces molecular oxygen to 2 water molecules using 4 electrons from cytochrome c in the IMS and 4 protons from the mitochondrial matrix. This chain is Cytochrome c oxidase subunit 2 (MT-CO2), found in Zelotomys hildegardeae (Hildegarde's broad-headed mouse).